Here is a 102-residue protein sequence, read N- to C-terminus: Small ribosomal subunit protein eS24 (102 aa).

This sequence belongs to the eukaryotic ribosomal protein eS24 family.

This is Small ribosomal subunit protein eS24 (rps24e) from Haloarcula marismortui (strain ATCC 43049 / DSM 3752 / JCM 8966 / VKM B-1809) (Halobacterium marismortui).